The primary structure comprises 1322 residues: WD repeat-containing protein 17 (1322 aa).

WD repeat units lie at residues 81 to 121 (EHKK…VIAK), 123 to 164 (DSTK…SGVI), 171 to 211 (SFLS…QKHV), 221 to 261 (DEED…CITT), and 266 to 307 (SAAA…PIDN). Residues 328–352 (KFSVQSPTKNHYTSSTSEAVPPPTL) are disordered. Positions 330-345 (SVQSPTKNHYTSSTSE) are enriched in polar residues. 7 WD repeats span residues 391–431 (GHVE…AVYT), 434–474 (GNEG…IIQR), 478–518 (HGTN…LHKY), 519–559 (KHPA…DQPL), 564–604 (GHTA…CINI), 607–647 (GHTA…CVDT), and 650–690 (DHGA…TPVQ).

The sequence is that of WD repeat-containing protein 17 (WDR17) from Homo sapiens (Human).